The primary structure comprises 344 residues: Late embryogenesis abundant protein 17 (344 aa).

2 disordered regions span residues Met-1–Ala-20 and Lys-116–Gly-258. A coiled-coil region spans residues Ser-3 to Arg-52. Basic and acidic residues-rich tracts occupy residues Lys-116–Val-163, Glu-172–Lys-230, and Asp-238–Asp-252.

The protein belongs to the LEA type 4 family. Expressed in embryos.

Its subcellular location is the nucleus. Its function is as follows. Involved in abiotic stress responses. May function as chaperone and contribute to prevent the formation of damaging protein aggregates. The polypeptide is Late embryogenesis abundant protein 17 (Oryza sativa subsp. japonica (Rice)).